The following is a 153-amino-acid chain: Regulator of sigma D (153 aa).

It belongs to the Rsd/AlgQ family. Interacts with RpoD.

It localises to the cytoplasm. Functionally, binds RpoD and negatively regulates RpoD-mediated transcription activation by preventing the interaction between the primary sigma factor RpoD with the catalytic core of the RNA polymerase and with promoter DNA. May be involved in replacement of the RNA polymerase sigma subunit from RpoD to RpoS during the transition from exponential growth to the stationary phase. The sequence is that of Regulator of sigma D from Pectobacterium atrosepticum (strain SCRI 1043 / ATCC BAA-672) (Erwinia carotovora subsp. atroseptica).